A 157-amino-acid chain; its full sequence is Small ribosomal subunit protein uS7 (157 aa).

Belongs to the universal ribosomal protein uS7 family. Part of the 30S ribosomal subunit. Contacts proteins S9 and S11.

Its function is as follows. One of the primary rRNA binding proteins, it binds directly to 16S rRNA where it nucleates assembly of the head domain of the 30S subunit. Is located at the subunit interface close to the decoding center, probably blocks exit of the E-site tRNA. The sequence is that of Small ribosomal subunit protein uS7 from Chlamydia pneumoniae (Chlamydophila pneumoniae).